A 775-amino-acid polypeptide reads, in one-letter code: pH-response regulator protein palF/RIM8 (775 aa).

5 disordered regions span residues 217–304 (EPIS…NTPS), 531–550 (RRKSEARRMSSTAEEAEFQQ), 586–623 (PDQIRWPDYPEQSEHEHYPFQPGTLPSPQPDEPMDEKA), 631–650 (TLLPSQPPCDPEAGPSSAVE), and 697–775 (AGSS…RYQR). Positions 262–278 (APSNVSSSSRLSNSSQS) are enriched in low complexity. Over residues 279–304 (FQIVTDPGSTASSGVRNSEARSNTPS) the composition is skewed to polar residues. Residues 697 to 709 (AGSSSAPLTSPSR) show a composition bias toward polar residues. 2 stretches are compositionally biased toward basic and acidic residues: residues 710–723 (PSEEDKQELERQRL) and 733–743 (PDARHNDRADD).

The protein belongs to the arrestin family. PalF/RIM8 subfamily.

Its function is as follows. Required for the proteolytic cleavage of the transcription factor pacC in response to alkaline ambient pH. The polypeptide is pH-response regulator protein palF/RIM8 (palF) (Emericella nidulans (strain FGSC A4 / ATCC 38163 / CBS 112.46 / NRRL 194 / M139) (Aspergillus nidulans)).